The sequence spans 103 residues: uncharacterized protein (103 aa).

Transmembrane regions (helical) follow at residues methionine 1–serine 21, isoleucine 29–phenylalanine 49, and valine 69–phenylalanine 89.

The protein localises to the cell membrane. This is an uncharacterized protein from Methanocaldococcus jannaschii (strain ATCC 43067 / DSM 2661 / JAL-1 / JCM 10045 / NBRC 100440) (Methanococcus jannaschii).